We begin with the raw amino-acid sequence, 336 residues long: Atypical chemokine receptor 1 (336 aa).

Topologically, residues 1-63 (MGNCLHPAEL…CNLLDDSALP (63 aa)) are extracellular. Residues Asn-16, Asn-27, and Asn-33 are each glycosylated (N-linked (GlcNAc...) asparagine). 2 disulfide bridges follow: Cys-51/Cys-276 and Cys-129/Cys-195. Residues 64 to 84 (FFILVSVLGILASGIVLFMFF) form a helical membrane-spanning segment. At 85-95 (RPLFHWQLCPG) the chain is on the cytoplasmic side. The chain crosses the membrane as a helical span at residues 96–116 (WPVLAQLAVGSALFSIVVPIL). Topologically, residues 117 to 129 (APGLGNTRSSALC) are extracellular. The helical transmembrane segment at 130 to 153 (SLGYCVWYGSAFAQALLLGCHASL) threads the bilayer. The Cytoplasmic portion of the chain corresponds to 154 to 166 (GPKLGADQVPGLT). Residues 167–187 (LGLSVGLWGVAALLTLPVTLA) form a helical membrane-spanning segment. Over 188–207 (SGASGGLCTPVYSMELKALQ) the chain is Extracellular. A helical transmembrane segment spans residues 208–228 (ATHAVACLAIFVLLPLGLFGA). The Cytoplasmic segment spans residues 229–244 (KGLKKALGMGPGPWMN). The helical transmembrane segment at 245-265 (ILWAWFIFWWPHGVVLGLDFL) threads the bilayer. Over 266–287 (VRSKLLLLSTCLAQQALDLLLN) the chain is Extracellular. A helical membrane pass occupies residues 288–308 (LAEALAILHCVATPLLLALFC). Over 309-336 (HQATRTLLPSLPLPEGWSSHLDTLGSKS) the chain is Cytoplasmic.

Belongs to the G-protein coupled receptor 1 family. Atypical chemokine receptor subfamily.

Its subcellular location is the early endosome. The protein localises to the recycling endosome. The protein resides in the membrane. Its function is as follows. Atypical chemokine receptor that controls chemokine levels and localization via high-affinity chemokine binding that is uncoupled from classic ligand-driven signal transduction cascades, resulting instead in chemokine sequestration, degradation, or transcytosis. Also known as interceptor (internalizing receptor) or chemokine-scavenging receptor or chemokine decoy receptor. Has a promiscuous chemokine-binding profile, interacting with inflammatory chemokines of both the CXC and the CC subfamilies but not with homeostatic chemokines. Acts as a receptor for chemokines including CCL2, CCL5, CCL7, CCL11, CCL13, CCL14, CCL17, CXCL5, CXCL6, IL8/CXCL8, CXCL11, GRO, RANTES, MCP-1 and TARC. May regulate chemokine bioavailability and, consequently, leukocyte recruitment through two distinct mechanisms: when expressed in endothelial cells, it sustains the abluminal to luminal transcytosis of tissue-derived chemokines and their subsequent presentation to circulating leukocytes; when expressed in erythrocytes, serves as blood reservoir of cognate chemokines but also as a chemokine sink, buffering potential surges in plasma chemokine levels. This Papio hamadryas (Hamadryas baboon) protein is Atypical chemokine receptor 1 (ACKR1).